Here is a 1524-residue protein sequence, read N- to C-terminus: DNA-directed RNA polymerase subunit beta' (1524 aa).

Residues Cys-58, Cys-60, Cys-73, and Cys-76 each contribute to the Zn(2+) site. Asp-739, Asp-741, and Asp-743 together coordinate Mg(2+). Positions 1112, 1194, 1201, and 1204 each coordinate Zn(2+). The interval 1502-1524 is disordered; the sequence is AVEAKEKEAPRRPVRREQPGKGL.

Belongs to the RNA polymerase beta' chain family. The RNAP catalytic core consists of 2 alpha, 1 beta, 1 beta' and 1 omega subunit. When a sigma factor is associated with the core the holoenzyme is formed, which can initiate transcription. Mg(2+) is required as a cofactor. The cofactor is Zn(2+).

It carries out the reaction RNA(n) + a ribonucleoside 5'-triphosphate = RNA(n+1) + diphosphate. Functionally, DNA-dependent RNA polymerase catalyzes the transcription of DNA into RNA using the four ribonucleoside triphosphates as substrates. The protein is DNA-directed RNA polymerase subunit beta' of Thermus aquaticus.